Reading from the N-terminus, the 1088-residue chain is MAGALENARKEIKRLSLDDTNESQYGQIYSVSGPVVIAENMIGCAMYELVKVGHDNLVGEVIRINGDKATIQVYEETAGVTVGDPVLRTGKPLSVELGPGLMETIYDGIQRPLKAIKDESQSIYIPRGIDVPALSRTVQYDFTPGQLKVGDHITGGDIFGSIYENSLLDDHKILLPPRARGTITSIAEAGSYNVEEPVLEVEFDGKKHKYSMMHTWPVRVPRPVAEKLTADHPLLTGQRVLDSLFPCVQGGTTCIPGAFGCGKTVISQSLSKFSNSDVIIYVGCFTKGTQVMMADGADKSIESIEVGDKVMGKDGMPREVVGLPRGYDDMYKVRQLSSTRRNAKSEGLMDFTVSADHKLILKTKQDVKIATRKIGGNTYTGVTFYVLEKTKTGIELVKAKTKVFGHHIHGQNGAEEKAATFAAGIDSKEYIDWIIEARDYVQVDEIVKTSTTQMINPVHFESGKLGNWLHEHKQNKSLAPQLGYLLGTWAGIGNVKSSAFTMNSKDDVKLATRIMNYSSKLGMTCSSTESGELNVAENEEEFFNNLGAEKDEAGDFTFDEFTDAMDELTINVHGAAASKKNNLLWNALKSLGFRAKSTDIVKSIPQHIAVDDIVVRESLIAGLVDAAGNVETKSNGSIEAVVRTSFRHVARGLVKIAHSLGIESSINIKDTHIDAAGVRQEFACIVNLTGAPLAGVLSKCALARNQTPVVKFTRDPVLFNFDLIKSAKENYYGITLAEETDHQFLLSNMALVHNCGERGNEMAEVLMEFPELFTEISGRKEPIMKRTTLVANTSNMPVAAREASIYTGITLAEYFRDQGKNVSMIADSSSRWAEALREISGRLGEMPADQGFPAYLGAKLASFYERAGKATALGSPDRVGSVSIVAAVSPAGGDFSDPVTTSTLGITQVFWGLDKKLAQRKHFPSINTSVSYSKYTNVLNKYYDSNYPEFPQLRDKIREILSNAEELEQVVQLVGKSALSDSDKITLDVATLIKEDFLQQNGYSSYDAFCPIWKTFDMMRAFISYYDEAQKAIANGAQWSKLAESTSDVKHAVSSAKFFEPSRGQKEGEKEFGDLLTTISERFAEASE.

257–264 (GAFGCGKT) is an ATP binding site. The DOD-type homing endonuclease domain maps to 485 to 662 (LLGTWAGIGN…LVKIAHSLGI (178 aa)).

The protein belongs to the ATPase alpha/beta chains family. V-ATPase is a heteromultimeric enzyme composed of a peripheral catalytic V1 complex (components A to H) attached to an integral membrane V0 proton pore complex (components: a, c, c', c'', d, e, f and VOA1). This protein undergoes a protein self splicing that involves a post-translational excision of the VDE intervening region (intein) followed by peptide ligation.

The protein resides in the vacuole membrane. The enzyme catalyses ATP + H2O + 4 H(+)(in) = ADP + phosphate + 5 H(+)(out). In terms of biological role, catalytic subunit of the V1 complex of vacuolar(H+)-ATPase (V-ATPase), a multisubunit enzyme composed of a peripheral complex (V1) that hydrolyzes ATP and a membrane integral complex (V0) that translocates protons. V-ATPase is responsible for acidifying and maintaining the pH of intracellular compartments. Functionally, VDE is an endonuclease that can cleave at a site present in a VMA1 allele that lacks the derived endonuclease segment of the open reading frame; cleavage at this site only occurs during meiosis and initiates 'homing', a genetic event that converts a VMA1 allele lacking VDE into one that contains it. This is V-type proton ATPase catalytic subunit A (VMA1) from Candida tropicalis (Yeast).